Here is a 100-residue protein sequence, read N- to C-terminus: NAD(P)H-quinone oxidoreductase subunit 4L, chloroplastic (100 aa).

Transmembrane regions (helical) follow at residues 1 to 21, 29 to 49, and 60 to 80; these read MLEHILSLGAYLFCIGIFGLI, ALMCLELIFNAVNINLITFSN, and IFAIFIIAIAAAEAAIGLAIV.

The protein belongs to the complex I subunit 4L family. In terms of assembly, NDH is composed of at least 16 different subunits, 5 of which are encoded in the nucleus.

It localises to the plastid. Its subcellular location is the chloroplast thylakoid membrane. It carries out the reaction a plastoquinone + NADH + (n+1) H(+)(in) = a plastoquinol + NAD(+) + n H(+)(out). It catalyses the reaction a plastoquinone + NADPH + (n+1) H(+)(in) = a plastoquinol + NADP(+) + n H(+)(out). NDH shuttles electrons from NAD(P)H:plastoquinone, via FMN and iron-sulfur (Fe-S) centers, to quinones in the photosynthetic chain and possibly in a chloroplast respiratory chain. The immediate electron acceptor for the enzyme in this species is believed to be plastoquinone. Couples the redox reaction to proton translocation, and thus conserves the redox energy in a proton gradient. The protein is NAD(P)H-quinone oxidoreductase subunit 4L, chloroplastic of Physcomitrium patens (Spreading-leaved earth moss).